A 339-amino-acid chain; its full sequence is Heat-inducible transcription repressor HrcA (339 aa).

Belongs to the HrcA family.

In terms of biological role, negative regulator of class I heat shock genes (grpE-dnaK-dnaJ and groELS operons). Prevents heat-shock induction of these operons. The sequence is that of Heat-inducible transcription repressor HrcA from Paraburkholderia xenovorans (strain LB400).